The primary structure comprises 473 residues: MSKPVITRFAPSPTGYLHIGGARTALFNWLYAKHCGGKMLLRIEDTDRERSTEAATAAILDGLTWLGLDWDGEAISQFERAPRHREVAEELVANGKAYYCYASPEELEEMREKARAEGRPPRYDGRWRDRDPSEAPAGVKPVIRIKAPRDGETVVHDAVQGDVRFPNKDLDDFIILRSDGTPTYMHAVVVDDHDMGVTHIIRGDDHLTNAARQTIIYNAMGWDVPQMSHIPLIHGADGAKLSKRHGALGVDAYRAIGYLPAALRNYLVRLGWSHGDDEIMSTEQMIEWFDVKDINKGAARFDFQKLEAINGLYMRSSDDQALFDALVAVLPEIEGGKELAEALDDKGRAQLLLAMPGLKERAKTLVELADGAKFIFASRPLALDEKAASLLNDEGRAVLKPVYPVLEAVGEWTAESLDAAIRAHAEAEGLKLGKIAQPLRAALTGRATSPGVFDVLVVLGREESLARIGDQIG.

Positions 11-21 (PSPTGYLHIGG) match the 'HIGH' region motif. The span at 113–133 (KARAEGRPPRYDGRWRDRDPS) shows a compositional bias: basic and acidic residues. The segment at 113 to 136 (KARAEGRPPRYDGRWRDRDPSEAP) is disordered. Residues 240-244 (KLSKR) carry the 'KMSKS' region motif. An ATP-binding site is contributed by Lys-243.

Belongs to the class-I aminoacyl-tRNA synthetase family. Glutamate--tRNA ligase type 1 subfamily. Monomer.

It localises to the cytoplasm. It carries out the reaction tRNA(Glu) + L-glutamate + ATP = L-glutamyl-tRNA(Glu) + AMP + diphosphate. Catalyzes the attachment of glutamate to tRNA(Glu) in a two-step reaction: glutamate is first activated by ATP to form Glu-AMP and then transferred to the acceptor end of tRNA(Glu). The protein is Glutamate--tRNA ligase 2 of Brucella abortus (strain S19).